A 240-amino-acid polypeptide reads, in one-letter code: MGRKFEVRKLSMAKTAGAKIKVYSKYGKEIYVCAKNGSLDPDSNLSLKRLIEKAKKDQVPSHVIEKAIDKAKGGAGEEFATARYEWFGPRYCMVIVDCLTDNNNRTFMDVRQAFVKNHAKIGGPGTVGHMFEHQAVFQFAGDDEDMVLENLMMEDVDVSDIECEDGIITVYAPHTEFFKVKNALAATMPDVAFDVEEISFVPQTMTEISGDDVAAFEKFLDVLNDCDDVQNIYHNAEIAE.

Belongs to the TACO1 family.

The protein resides in the cytoplasm. This chain is Probable transcriptional regulatory protein PBPRB1582, found in Photobacterium profundum (strain SS9).